A 139-amino-acid polypeptide reads, in one-letter code: NADH-quinone oxidoreductase subunit A (139 aa).

Helical transmembrane passes span 11-31 (LWPL…MLAL), 70-90 (LIAI…AWAI), and 97-117 (WPGY…LVYL).

The protein belongs to the complex I subunit 3 family. In terms of assembly, NDH-1 is composed of 14 different subunits. Subunits NuoA, H, J, K, L, M, N constitute the membrane sector of the complex.

It is found in the cell inner membrane. The enzyme catalyses a quinone + NADH + 5 H(+)(in) = a quinol + NAD(+) + 4 H(+)(out). In terms of biological role, NDH-1 shuttles electrons from NADH, via FMN and iron-sulfur (Fe-S) centers, to quinones in the respiratory chain. The immediate electron acceptor for the enzyme in this species is believed to be ubiquinone. Couples the redox reaction to proton translocation (for every two electrons transferred, four hydrogen ions are translocated across the cytoplasmic membrane), and thus conserves the redox energy in a proton gradient. This chain is NADH-quinone oxidoreductase subunit A, found in Methylococcus capsulatus (strain ATCC 33009 / NCIMB 11132 / Bath).